The primary structure comprises 357 residues: Phosphoribosylformylglycinamidine cyclo-ligase (357 aa).

It belongs to the AIR synthase family.

The protein localises to the cytoplasm. The catalysed reaction is 2-formamido-N(1)-(5-O-phospho-beta-D-ribosyl)acetamidine + ATP = 5-amino-1-(5-phospho-beta-D-ribosyl)imidazole + ADP + phosphate + H(+). The protein operates within purine metabolism; IMP biosynthesis via de novo pathway; 5-amino-1-(5-phospho-D-ribosyl)imidazole from N(2)-formyl-N(1)-(5-phospho-D-ribosyl)glycinamide: step 2/2. The protein is Phosphoribosylformylglycinamidine cyclo-ligase of Nitrobacter winogradskyi (strain ATCC 25391 / DSM 10237 / CIP 104748 / NCIMB 11846 / Nb-255).